The sequence spans 878 residues: Ecdysone receptor (878 aa).

2 disordered regions span residues 1-27 (MKRR…SSSN) and 209-254 (GLGM…SKKG). The tract at residues 1 to 263 (MKRRWSNNGG…GPAPRVQEEL (263 aa)) is modulating. 2 NR C4-type zinc fingers span residues 264 to 284 (CLVC…CEGC) and 300 to 324 (CKFG…LKKC). The segment at residues 264-336 (CLVCGDRASG…VGMRPECVVP (73 aa)) is a DNA-binding region (nuclear receptor). The segment at 344–374 (RREKKAQKEKDKMTTSPSSQHGGNGSLASGG) is disordered. Gly residues predominate over residues 365–374 (GGNGSLASGG). One can recognise an NR LBD domain in the interval 419–654 (NQLAVIYKLI…FLEEIWDVHA (236 aa)). Low complexity-rich tracts occupy residues 698–709 (TSAAAAAAQHQP) and 728–759 (QTQP…QLQP). Positions 698 to 759 (TSAAAAAAQH…QPQLQTQLQP (62 aa)) are disordered.

This sequence belongs to the nuclear hormone receptor family. NR1 subfamily. Heterodimer of USP and ECR. Only the heterodimer is capable of high-affinity binding to ecdysone. Interacts with trr in an ecdysone-dependent manner. Upon ecdysone stimulation, interacts with Nup98. In terms of tissue distribution, isoform B1 predominates over isoform A in larval tissues, imaginal histoblast nests and midgut islands. Isoform A predominates over B1 in imaginal disks, and the larval prothoracic gland.

The protein localises to the nucleus. In terms of biological role, receptor for ecdysone. Binds to ecdysone response elements (ECRES) following ecdysone-binding, and recruitment of a complex containing the histone methyltransferase trr, leads to activate transcription of target genes. The protein is Ecdysone receptor (EcR) of Drosophila melanogaster (Fruit fly).